A 285-amino-acid polypeptide reads, in one-letter code: Diaminopimelate epimerase (285 aa).

Positions 15 and 68 each coordinate substrate. C77 functions as the Proton donor in the catalytic mechanism. Residues 78–79 (GN), N165, N201, and 219–220 (ER) each bind substrate. C228 acts as the Proton acceptor in catalysis. A substrate-binding site is contributed by 229–230 (GT).

Belongs to the diaminopimelate epimerase family. Homodimer.

It localises to the cytoplasm. The enzyme catalyses (2S,6S)-2,6-diaminopimelate = meso-2,6-diaminopimelate. It participates in amino-acid biosynthesis; L-lysine biosynthesis via DAP pathway; DL-2,6-diaminopimelate from LL-2,6-diaminopimelate: step 1/1. Its function is as follows. Catalyzes the stereoinversion of LL-2,6-diaminopimelate (L,L-DAP) to meso-diaminopimelate (meso-DAP), a precursor of L-lysine and an essential component of the bacterial peptidoglycan. The sequence is that of Diaminopimelate epimerase from Synechococcus sp. (strain JA-2-3B'a(2-13)) (Cyanobacteria bacterium Yellowstone B-Prime).